The primary structure comprises 158 residues: 2-C-methyl-D-erythritol 2,4-cyclodiphosphate synthase (158 aa).

Residues aspartate 9 and histidine 11 each contribute to the a divalent metal cation site. Residues 9 to 11 (DVH) and 35 to 36 (HS) each bind 4-CDP-2-C-methyl-D-erythritol 2-phosphate. Histidine 43 provides a ligand contact to a divalent metal cation. 4-CDP-2-C-methyl-D-erythritol 2-phosphate-binding positions include 57–59 (DIG), 62–66 (FPDTD), 101–107 (AQAPKMA), 133–136 (TTTE), phenylalanine 140, and arginine 143.

The protein belongs to the IspF family. Homotrimer. Requires a divalent metal cation as cofactor.

The catalysed reaction is 4-CDP-2-C-methyl-D-erythritol 2-phosphate = 2-C-methyl-D-erythritol 2,4-cyclic diphosphate + CMP. The protein operates within isoprenoid biosynthesis; isopentenyl diphosphate biosynthesis via DXP pathway; isopentenyl diphosphate from 1-deoxy-D-xylulose 5-phosphate: step 4/6. Functionally, involved in the biosynthesis of isopentenyl diphosphate (IPP) and dimethylallyl diphosphate (DMAPP), two major building blocks of isoprenoid compounds. Catalyzes the conversion of 4-diphosphocytidyl-2-C-methyl-D-erythritol 2-phosphate (CDP-ME2P) to 2-C-methyl-D-erythritol 2,4-cyclodiphosphate (ME-CPP) with a corresponding release of cytidine 5-monophosphate (CMP). The sequence is that of 2-C-methyl-D-erythritol 2,4-cyclodiphosphate synthase from Vibrio vulnificus (strain YJ016).